A 510-amino-acid polypeptide reads, in one-letter code: Maturase K (510 aa).

This sequence belongs to the intron maturase 2 family. MatK subfamily.

The protein resides in the plastid. Its function is as follows. Usually encoded in the trnK tRNA gene intron. Probably assists in splicing its own and other chloroplast group II introns. The chain is Maturase K from Bartsia alpina (Velvet bells).